The primary structure comprises 710 residues: Early transcription factor 82 kDa subunit (710 aa).

It belongs to the poxviridae VETF large subunit family. Heterodimer of a 70 kDa and a 82 kDa subunit. Part of the early transcription complex composed of ETF, RAP94/OPG109, and the DNA-directed RNA polymerase.

It is found in the virion. Functionally, acts with RNA polymerase to initiate transcription from early gene promoters. Is recruited by the RPO-associated protein of 94 kDa RAP94/OPG109 to form the early transcription complex, which also contains the core RNA polymerase. ETF heterodimer binds to early gene promoters. The sequence is that of Early transcription factor 82 kDa subunit (OPG133) from Variola virus (isolate Human/India/Ind3/1967) (VARV).